The following is a 423-amino-acid chain: GTPase HflX (423 aa).

The region spanning 201–363 (IQLALVGYTN…KIEQALKGMM (163 aa)) is the Hflx-type G domain. Residues 207 to 214 (GYTNAGKS), 232 to 236 (FATLD), 254 to 257 (DTVG), 320 to 323 (NKAD), and 341 to 343 (SAY) contribute to the GTP site. Mg(2+) is bound by residues Ser214 and Thr234.

Belongs to the TRAFAC class OBG-HflX-like GTPase superfamily. HflX GTPase family. As to quaternary structure, monomer. Associates with the 50S ribosomal subunit. Mg(2+) is required as a cofactor.

Its subcellular location is the cytoplasm. GTPase that associates with the 50S ribosomal subunit and may have a role during protein synthesis or ribosome biogenesis. In Alkalihalophilus pseudofirmus (strain ATCC BAA-2126 / JCM 17055 / OF4) (Bacillus pseudofirmus), this protein is GTPase HflX.